The sequence spans 478 residues: Noelin-3 (478 aa).

The first 23 residues, 1–23 (MSAPLLKLGAVLSTMAMISNWMS), serve as a signal peptide directing secretion. Asparagine 33, asparagine 95, asparagine 179, asparagine 299, and asparagine 465 each carry an N-linked (GlcNAc...) asparagine glycan. Residues 77-217 (CSRDAKSRQL…TRLRDCMKKL (141 aa)) are a coiled coil. The region spanning 218-470 (TCGKLMKITG…QVLFNVTLFH (253 aa)) is the Olfactomedin-like domain. An intrachain disulfide couples cysteine 219 to cysteine 401.

As to quaternary structure, peripherally associated with AMPAR complex. AMPAR complex consists of an inner core made of 4 pore-forming GluA/GRIA proteins (GRIA1, GRIA2, GRIA3 and GRIA4) and 4 major auxiliary subunits arranged in a twofold symmetry. One of the two pairs of distinct binding sites is occupied either by CNIH2, CNIH3 or CACNG2, CACNG3. The other harbors CACNG2, CACNG3, CACNG4, CACNG8 or GSG1L. This inner core of AMPAR complex is complemented by outer core constituents binding directly to the GluA/GRIA proteins at sites distinct from the interaction sites of the inner core constituents. Outer core constituents include at least PRRT1, PRRT2, CKAMP44/SHISA9, FRRS1L and NRN1. The proteins of the inner and outer core serve as a platform for other, more peripherally associated AMPAR constituents, including OLFM3. Alone or in combination, these auxiliary subunits control the gating and pharmacology of the AMPAR complex and profoundly impact their biogenesis and protein processing. Homodimer. Interacts with MYOC. Interacts with OLFM2. Expressed in the brain (at protein level). Also expressed in the retina, mainly in the ganglion cell layer and in the amacrine cell subregion of the inner nuclear layer. Expressed at high levels in the epithelial cells of the posterior iris and the ciliary body and, at lower levels, in the trabecular meshwork. Isoform 2 preferentially expressed in retina and brain, while isoform 1 preferentially expressed in the tissues of the eye angle.

The protein resides in the secreted. It localises to the synapse. This is Noelin-3 (Olfm3) from Rattus norvegicus (Rat).